The sequence spans 431 residues: Enolase (431 aa).

A (2R)-2-phosphoglycerate-binding site is contributed by Gln-163. Glu-205 (proton donor) is an active-site residue. Mg(2+) contacts are provided by Asp-242, Glu-288, and Asp-315. Residues Lys-340, Arg-369, Ser-370, and Lys-391 each coordinate (2R)-2-phosphoglycerate. Lys-340 serves as the catalytic Proton acceptor.

The protein belongs to the enolase family. Requires Mg(2+) as cofactor.

The protein localises to the cytoplasm. It localises to the secreted. Its subcellular location is the cell surface. The catalysed reaction is (2R)-2-phosphoglycerate = phosphoenolpyruvate + H2O. Its pathway is carbohydrate degradation; glycolysis; pyruvate from D-glyceraldehyde 3-phosphate: step 4/5. In terms of biological role, catalyzes the reversible conversion of 2-phosphoglycerate (2-PG) into phosphoenolpyruvate (PEP). It is essential for the degradation of carbohydrates via glycolysis. The protein is Enolase of Acholeplasma laidlawii (strain PG-8A).